We begin with the raw amino-acid sequence, 251 residues long: Small ribosomal subunit protein uS2 (251 aa).

A disordered region spans residues 232-251; that stretch reads LQTGEEEMAAAEGESEQVEA. The segment covering 235 to 251 has biased composition (acidic residues); sequence GEEEMAAAEGESEQVEA.

This sequence belongs to the universal ribosomal protein uS2 family.

The chain is Small ribosomal subunit protein uS2 from Geobacter metallireducens (strain ATCC 53774 / DSM 7210 / GS-15).